We begin with the raw amino-acid sequence, 322 residues long: Ribose-phosphate pyrophosphokinase (322 aa).

ATP is bound by residues 43 to 45 and 102 to 103; these read DGE and RQ. The Mg(2+) site is built by histidine 137 and aspartate 177. Lysine 201 is an active-site residue. D-ribose 5-phosphate is bound by residues arginine 203, aspartate 227, and 231 to 235; that span reads DTAGT.

It belongs to the ribose-phosphate pyrophosphokinase family. Class I subfamily. In terms of assembly, homohexamer. Mg(2+) is required as a cofactor.

The protein localises to the cytoplasm. It catalyses the reaction D-ribose 5-phosphate + ATP = 5-phospho-alpha-D-ribose 1-diphosphate + AMP + H(+). It participates in metabolic intermediate biosynthesis; 5-phospho-alpha-D-ribose 1-diphosphate biosynthesis; 5-phospho-alpha-D-ribose 1-diphosphate from D-ribose 5-phosphate (route I): step 1/1. Functionally, involved in the biosynthesis of the central metabolite phospho-alpha-D-ribosyl-1-pyrophosphate (PRPP) via the transfer of pyrophosphoryl group from ATP to 1-hydroxyl of ribose-5-phosphate (Rib-5-P). The sequence is that of Ribose-phosphate pyrophosphokinase from Xylella fastidiosa (strain Temecula1 / ATCC 700964).